Consider the following 902-residue polypeptide: ATP-dependent DNA helicase CHL1 (902 aa).

Residues 15–414 (HKKDFHHPYT…YVAQAIRVVD (400 aa)) enclose the Helicase ATP-binding domain. Position 50–57 (50–57 (SPTGTGKS)) interacts with ATP. Residues 128-162 (DRMSGNGNGNMRGGKRRKVGGDGEGDLVGGSNGSN) form a disordered region. Positions 244, 262, 276, and 315 each coordinate [4Fe-4S] cluster. The DEAH box signature appears at 358–361 (DEAH). The tract at residues 775-804 (FYQEKESNNKDGNGNEEEGNGKKKENREKI) is disordered. Residues 793–804 (GNGKKKENREKI) are compositionally biased toward basic and acidic residues.

It belongs to the DEAD box helicase family. DEAH subfamily. DDX11/CHL1 sub-subfamily. It depends on [4Fe-4S] cluster as a cofactor.

The protein resides in the nucleus. It carries out the reaction Couples ATP hydrolysis with the unwinding of duplex DNA at the replication fork by translocating in the 5'-3' direction. This creates two antiparallel DNA single strands (ssDNA). The leading ssDNA polymer is the template for DNA polymerase III holoenzyme which synthesizes a continuous strand.. The catalysed reaction is ATP + H2O = ADP + phosphate + H(+). Its function is as follows. ATP-dependent DNA helicase important for chromosome transmission and normal cell cycle progression in G(2)/M. May have a role in changing DNA topology to allow the loading of proteins involved in maintaining sister chromatid cohesion in the vicinity of the centromeres. Has a specific role in chromosome segregation during meiosis II. This chain is ATP-dependent DNA helicase CHL1 (CHL1), found in Sclerotinia sclerotiorum (strain ATCC 18683 / 1980 / Ss-1) (White mold).